A 266-amino-acid chain; its full sequence is Dihydropteroate synthase (266 aa).

Residues 12-260 (AAIMGILNVT…DVKANQDIVA (249 aa)) form the Pterin-binding domain. A Mg(2+)-binding site is contributed by asparagine 19. (7,8-dihydropterin-6-yl)methyl diphosphate contacts are provided by residues threonine 59, aspartate 93, asparagine 112, aspartate 176, lysine 212, and 248-250 (RVH).

It belongs to the DHPS family. Homodimer or homotrimer. Mg(2+) serves as cofactor.

It catalyses the reaction (7,8-dihydropterin-6-yl)methyl diphosphate + 4-aminobenzoate = 7,8-dihydropteroate + diphosphate. It functions in the pathway cofactor biosynthesis; tetrahydrofolate biosynthesis; 7,8-dihydrofolate from 2-amino-4-hydroxy-6-hydroxymethyl-7,8-dihydropteridine diphosphate and 4-aminobenzoate: step 1/2. Its function is as follows. Catalyzes the condensation of para-aminobenzoate (pABA) with 6-hydroxymethyl-7,8-dihydropterin diphosphate (DHPt-PP) to form 7,8-dihydropteroate (H2Pte), the immediate precursor of folate derivatives. In Streptococcus pyogenes serotype M6 (strain ATCC BAA-946 / MGAS10394), this protein is Dihydropteroate synthase (folP).